Consider the following 181-residue polypeptide: CASP-like protein UU-1 (181 aa).

The Cytoplasmic segment spans residues 1–30; that stretch reads MTMELESQEVVVETTTAAAAARAASAAHVR. The chain crosses the membrane as a helical span at residues 31-51; sequence TTVALRLLAFAASLAAAVVVA. The Extracellular segment spans residues 52–65; sequence TNRQERWGITVTFK. The chain crosses the membrane as a helical span at residues 66-86; sequence MFAVWEAFVAINFACAAYALL. Topologically, residues 87–107 are cytoplasmic; it reads TAVFVKKLVSKHWLHHMDQFT. Residues 108–128 form a helical membrane-spanning segment; the sequence is VNLQAASTAGAGAVGSVAMWG. Residues 129-147 are Extracellular-facing; it reads NEPSGWYAVCRLYRLYCDR. Residues 148 to 168 form a helical membrane-spanning segment; it reads GAVSLALAFVAFVAFGVASSL. The Cytoplasmic segment spans residues 169-181; that stretch reads SRYPRAPPPPAPR.

The protein belongs to the Casparian strip membrane proteins (CASP) family. Homodimer and heterodimers.

It localises to the cell membrane. The chain is CASP-like protein UU-1 from Sorghum bicolor (Sorghum).